We begin with the raw amino-acid sequence, 886 residues long: Microsomal triglyceride transfer protein (886 aa).

The N-terminal stretch at 1–24 (MLRLAGLLLCVTSFLSTSSLGANA) is a signal peptide. Positions 28-662 (LDNDRLYRYS…QSNNALLHGL (635 aa)) constitute a Vitellogenin domain. 2 disulfide bridges follow: Cys174–Cys194 and Cys440–Cys445.

As to quaternary structure, heterodimer; heterodimerizes with the protein disulfide isomerase. Interacts with apolipoprotein B.

The protein resides in the endoplasmic reticulum. In terms of biological role, catalyzes the transport of triglyceride, cholesteryl ester, and phospholipid between phospholipid surfaces. Required for the secretion of plasma lipoproteins that contain apolipoprotein B. The sequence is that of Microsomal triglyceride transfer protein from Megalobrama amblycephala (Chinese blunt snout bream).